A 122-amino-acid polypeptide reads, in one-letter code: Large ribosomal subunit protein uL14c (122 aa).

This sequence belongs to the universal ribosomal protein uL14 family. Part of the 50S ribosomal subunit.

The protein resides in the plastid. It is found in the chloroplast. In terms of biological role, binds to 23S rRNA. The polypeptide is Large ribosomal subunit protein uL14c (Carica papaya (Papaya)).